The chain runs to 110 residues: Protein NATD1 (110 aa).

One can recognise an N-acetyltransferase domain in the interval 19–109 (EHDRQRRQFS…PLPQYLERLQ (91 aa)).

This sequence belongs to the NATD1 family. Expressed in the heart, testis, kidney and lung.

This chain is Protein NATD1 (Natd1), found in Mus musculus (Mouse).